The chain runs to 115 residues: Replication initiation control protein YabA (115 aa).

His90, Cys92, Cys106, and Cys109 together coordinate Zn(2+).

The protein belongs to the YabA family. In terms of assembly, homotetramer. Interacts with both DnaA and DnaN, acting as a bridge between these two proteins. Zn(2+) is required as a cofactor.

Its subcellular location is the cytoplasm. The protein localises to the nucleoid. Involved in control of chromosome replication initiation. Inhibits the cooperative binding of DnaA to the oriC region, thus negatively regulating initiation of chromosome replication. Inhibits the ability of DnaA-ATP to form a helix on DNA; does not disassemble preformed DnaA-DNA helices. Decreases the residence time of DnaA on the chromosome at its binding sites (oriC, replication forks and promoter-binding sites). Tethers DnaA to the replication machinery via the DNA polymerase beta sliding clamp subunit (dnaN). Associates with oriC and other DnaA targets on the chromosome in a DnaA-dependent manner. In Staphylococcus aureus (strain bovine RF122 / ET3-1), this protein is Replication initiation control protein YabA.